A 72-amino-acid polypeptide reads, in one-letter code: uncharacterized protein (72 aa).

Positions 1–17 (MSLGLAIAVGIVLGVVA) are cleaved as a signal peptide.

This is an uncharacterized protein from Schizosaccharomyces pombe (strain 972 / ATCC 24843) (Fission yeast).